The following is a 401-amino-acid chain: Dual-specificity RNA methyltransferase RlmN (401 aa).

The Proton acceptor role is filled by glutamate 114. Residues 120–365 form the Radical SAM core domain; that stretch reads DKGRGTLCVS…TMVRRTRGDD (246 aa). A disulfide bridge links cysteine 127 with cysteine 370. Residues cysteine 134, cysteine 138, and cysteine 141 each contribute to the [4Fe-4S] cluster site. Residues 187-188, serine 219, 241-243, and asparagine 327 each bind S-adenosyl-L-methionine; these read GE and SLH. Residue cysteine 370 is the S-methylcysteine intermediate of the active site.

The protein belongs to the radical SAM superfamily. RlmN family. The cofactor is [4Fe-4S] cluster.

It is found in the cytoplasm. It carries out the reaction adenosine(2503) in 23S rRNA + 2 reduced [2Fe-2S]-[ferredoxin] + 2 S-adenosyl-L-methionine = 2-methyladenosine(2503) in 23S rRNA + 5'-deoxyadenosine + L-methionine + 2 oxidized [2Fe-2S]-[ferredoxin] + S-adenosyl-L-homocysteine. The enzyme catalyses adenosine(37) in tRNA + 2 reduced [2Fe-2S]-[ferredoxin] + 2 S-adenosyl-L-methionine = 2-methyladenosine(37) in tRNA + 5'-deoxyadenosine + L-methionine + 2 oxidized [2Fe-2S]-[ferredoxin] + S-adenosyl-L-homocysteine. Functionally, specifically methylates position 2 of adenine 2503 in 23S rRNA and position 2 of adenine 37 in tRNAs. m2A2503 modification seems to play a crucial role in the proofreading step occurring at the peptidyl transferase center and thus would serve to optimize ribosomal fidelity. The polypeptide is Dual-specificity RNA methyltransferase RlmN (Xanthomonas campestris pv. campestris (strain B100)).